Here is a 360-residue protein sequence, read N- to C-terminus: NAD(P)H-quinone oxidoreductase subunit 1, chloroplastic (360 aa).

The next 9 helical transmembrane spans lie at 27-47 (IWIFVPIFSLVLGIITGVLVI), 98-118 (FSIGPSIAVISILLSYSVIPF), 129-149 (IGIFLWIAISSIAPIGLLMSG), 165-185 (AAQSISYEIPLTLCVLSISLL), 203-223 (FWGWNLWRQPIGFIIFLISSL), 248-268 (YSGIKFGLFYVASYLNLLISS), 269-289 (LFVTVLYLGGWNISIPYISIL), 297-317 (IFGTTIGIFITLAKTYLFLFI), and 340-360 (FLLPISLGNLLLTTSFQLFSL).

It belongs to the complex I subunit 1 family. In terms of assembly, NDH is composed of at least 16 different subunits, 5 of which are encoded in the nucleus.

It localises to the plastid. Its subcellular location is the chloroplast thylakoid membrane. It carries out the reaction a plastoquinone + NADH + (n+1) H(+)(in) = a plastoquinol + NAD(+) + n H(+)(out). The catalysed reaction is a plastoquinone + NADPH + (n+1) H(+)(in) = a plastoquinol + NADP(+) + n H(+)(out). In terms of biological role, NDH shuttles electrons from NAD(P)H:plastoquinone, via FMN and iron-sulfur (Fe-S) centers, to quinones in the photosynthetic chain and possibly in a chloroplast respiratory chain. The immediate electron acceptor for the enzyme in this species is believed to be plastoquinone. Couples the redox reaction to proton translocation, and thus conserves the redox energy in a proton gradient. This is NAD(P)H-quinone oxidoreductase subunit 1, chloroplastic from Lepidium virginicum (Virginia pepperweed).